Here is an 820-residue protein sequence, read N- to C-terminus: Leucine--tRNA ligase (820 aa).

Positions 42 to 52 match the 'HIGH' region motif; sequence PYPSGDLHMGH. Residues 576–580 carry the 'KMSKS' region motif; it reads KMSKS. An ATP-binding site is contributed by lysine 579.

Belongs to the class-I aminoacyl-tRNA synthetase family.

Its subcellular location is the cytoplasm. The catalysed reaction is tRNA(Leu) + L-leucine + ATP = L-leucyl-tRNA(Leu) + AMP + diphosphate. The chain is Leucine--tRNA ligase from Coxiella burnetii (strain CbuG_Q212) (Coxiella burnetii (strain Q212)).